We begin with the raw amino-acid sequence, 115 residues long: Large ribosomal subunit protein P2 (115 aa).

M1 is subject to N-acetylmethionine. Phosphoserine occurs at positions 17 and 19. K21 is subject to N6-acetyllysine; alternate. Position 21 is an N6-succinyllysine; alternate (K21). Over residues 69–90 (GAXAVAAAPGSXAPAAGSAPAA) the composition is skewed to low complexity. Residues 69–115 (GAXAVAAAPGSXAPAAGSAPAAAEEKKEEKKEESEESDDDMGFGLFD) are disordered. Phosphoserine is present on residues S79 and S86. Positions 91–101 (AEEKKEEKKEE) are enriched in basic and acidic residues. S102 and S105 each carry phosphoserine.

The protein belongs to the eukaryotic ribosomal protein P1/P2 family. In terms of assembly, heterodimer with RPLP1 at the lateral ribosomal stalk of the large ribosomal subunit.

In terms of biological role, plays an important role in the elongation step of protein synthesis. The chain is Large ribosomal subunit protein P2 (RPLP2) from Sus scrofa (Pig).